The chain runs to 179 residues: Cytochrome b6-f complex iron-sulfur subunit (179 aa).

A helical membrane pass occupies residues 21–43 (LLTFGTVTGVALGALYPVVNYFI). A Rieske domain is found at 61–162 (GNDVSVTKFL…TNVSDDKIVL (102 aa)). [2Fe-2S] cluster-binding residues include Cys-108, His-110, Cys-126, and His-129. A disulfide bond links Cys-113 and Cys-128.

Belongs to the Rieske iron-sulfur protein family. As to quaternary structure, the 4 large subunits of the cytochrome b6-f complex are cytochrome b6, subunit IV (17 kDa polypeptide, PetD), cytochrome f and the Rieske protein, while the 4 small subunits are PetG, PetL, PetM and PetN. The complex functions as a dimer. It depends on [2Fe-2S] cluster as a cofactor.

It is found in the cellular thylakoid membrane. The enzyme catalyses 2 oxidized [plastocyanin] + a plastoquinol + 2 H(+)(in) = 2 reduced [plastocyanin] + a plastoquinone + 4 H(+)(out). Its function is as follows. Component of the cytochrome b6-f complex, which mediates electron transfer between photosystem II (PSII) and photosystem I (PSI), cyclic electron flow around PSI, and state transitions. This is Cytochrome b6-f complex iron-sulfur subunit from Nostoc punctiforme (strain ATCC 29133 / PCC 73102).